The primary structure comprises 158 residues: Peptide deformylase (158 aa).

Fe cation is bound by residues C88 and H130. Residue E131 is part of the active site. H134 contacts Fe cation.

The protein belongs to the polypeptide deformylase family. Fe(2+) serves as cofactor.

The enzyme catalyses N-terminal N-formyl-L-methionyl-[peptide] + H2O = N-terminal L-methionyl-[peptide] + formate. Removes the formyl group from the N-terminal Met of newly synthesized proteins. Requires at least a dipeptide for an efficient rate of reaction. N-terminal L-methionine is a prerequisite for activity but the enzyme has broad specificity at other positions. The chain is Peptide deformylase from Agathobacter rectalis (strain ATCC 33656 / DSM 3377 / JCM 17463 / KCTC 5835 / VPI 0990) (Eubacterium rectale).